The chain runs to 428 residues: Dihydroorotase (428 aa).

Residues His-59 and His-61 each contribute to the Zn(2+) site. Substrate is bound by residues His-61–Arg-63 and Asn-93. Zn(2+)-binding residues include Asp-151, His-178, and His-231. Asn-277 is a substrate binding site. Residue Asp-304 coordinates Zn(2+). Asp-304 is an active-site residue. Substrate is bound by residues His-308 and Phe-322–Gly-323.

The protein belongs to the metallo-dependent hydrolases superfamily. DHOase family. Class I DHOase subfamily. Requires Zn(2+) as cofactor.

It carries out the reaction (S)-dihydroorotate + H2O = N-carbamoyl-L-aspartate + H(+). Its pathway is pyrimidine metabolism; UMP biosynthesis via de novo pathway; (S)-dihydroorotate from bicarbonate: step 3/3. In terms of biological role, catalyzes the reversible cyclization of carbamoyl aspartate to dihydroorotate. The chain is Dihydroorotase from Halalkalibacterium halodurans (strain ATCC BAA-125 / DSM 18197 / FERM 7344 / JCM 9153 / C-125) (Bacillus halodurans).